The chain runs to 217 residues: MQFSSAARTVDENVDYLFKVILIGDSNVGKTCVVQHFKSGVYSESQQNTIGVDFTVRSLEIDGKKVKMQVWDTAGQERFRTITQSYYRSAHAAIIAYDLTRRSTFESVPHWIHEIEKYGAANLVIMLIGNKSDLWEKRHVLFEDACTLAEKYGLLAVLETSAKESRNIDEVFVLMAKELIARNSLHLYGESAQQGLPQDSSPVLVAHVPSERTHCTC.

Ser26, Val28, Gly29, Lys30, Thr31, Cys32, Tyr42, Ser43, Glu44, Ser45, and Thr49 together coordinate GTP. Residue Thr31 participates in Mg(2+) binding. The Switch 1 signature appears at 39–54; sequence SGVYSESQQNTIGVDF. Mg(2+)-binding residues include Thr49 and Asp72. Residues 74–89 carry the Switch 2 motif; sequence AGQERFRTITQSYYRS. Gly75, Asn130, Lys131, Asp133, Ser161, Ala162, and Lys163 together coordinate GTP. Residues Cys215 and Cys217 are each lipidated (S-geranylgeranyl cysteine). Cys217 bears the Cysteine methyl ester mark.

Belongs to the small GTPase superfamily. Rab family. It depends on Mg(2+) as a cofactor.

The protein localises to the cell membrane. It catalyses the reaction GTP + H2O = GDP + phosphate + H(+). Its activity is regulated as follows. Regulated by guanine nucleotide exchange factors (GEFs) which promote the exchange of bound GDP for free GTP. Regulated by GTPase activating proteins (GAPs) which increase the GTP hydrolysis activity. Inhibited by GDP dissociation inhibitors (GDIs). Functionally, the small GTPases Rab are key regulators of intracellular membrane trafficking, from the formation of transport vesicles to their fusion with membranes. Rabs cycle between an inactive GDP-bound form and an active GTP-bound form that is able to recruit to membranes different set of downstream effectors directly responsible for vesicle formation, movement, tethering and fusion. The polypeptide is Ras-related protein Rab-19 (Rattus norvegicus (Rat)).